Here is a 59-residue protein sequence, read N- to C-terminus: Potassium channel toxin alpha-KTx 16.7 (59 aa).

Positions M1–A22 are cleaved as a signal peptide. 3 cysteine pairs are disulfide-bonded: C30/C51, C36/C56, and C40/C58.

It belongs to the short scorpion toxin superfamily. Potassium channel inhibitor family. Alpha-KTx 16 subfamily. In terms of tissue distribution, expressed by the venom gland.

It localises to the secreted. In terms of biological role, may play a role in blocking voltage-gated potassium channels Kv1.2/KCNA2, and Kv1.3/KCNA3. Blocks the voltage-gated potassium channel Kv1.3/KCNA3, with an IC(50) of 118.3 +-55.8 nM. The protein is Potassium channel toxin alpha-KTx 16.7 of Mesobuthus gibbosus (Mediterranean checkered scorpion).